The primary structure comprises 756 residues: MILSSQLMLALIAVSGYGKAMQVPKKDHENRQYFAIESYDDVGNLLAEHSDWSFEHDVRGLANHYVFSKPLQSLGKRDAIDTGYSENIIDFHDLPPVQLHKRLPIGDSSMEQIQNARILFNISDPLFDQQWHLINPNYPGNDVNVTGLWKENITGYGVVAALVDDGLDYENEDLKDNFCVEGSWDFNDNNPLPKPRLKDDYHGTRCAGEIAAFRNDICGVGVAYNSKVSGIRILSGQITAEDEAASLIYGLDVNDIYSCSWGPSDDGKTMQAPDTLVKKAIIKGVTEGRDAKGALYVFASGNGGMFGDSCNFDGYTNSIFSITVGAIDWKGLHPPYSESCSAVMVVTYSSGSGNYIKTTDLDEKCSNTHGGTSAAAPLAAGIYTLVLEANPNLTWRDVQYLSILSSEEINPHDGKWQDTAMGKRYSHTYGFGKLDAYNIVHMAKSWINVNPQGWLYLPTIVEKQSISNSDEVIESTVSVSAEEFKQNNLKRLEHVTVTVDIDAPYRGHVLVDLISPDGVTSTLATARRLDKNRYGFQNWTFMSVAHWGSSGVGSWKLKVKSTHDNEIVTLKSWRLKMFGETIDAKKAKVISYGNDKEDAEVKSTESKTTTPTAQTSSFTTTSGEETSGANKLPRPEQAAQLYLAIFVIGAIVIIIYYLFFLKSRRIIRRSRAEAYEFDIIDTDSEYDSSINQTAESISGEVNDDNLEDFNFDINEEELSPRESSSNNPFGNESLESFDNSPDHTSNLLGQNSIPNK.

An N-terminal signal peptide occupies residues 1–24 (MILSSQLMLALIAVSGYGKAMQVP). Asn121, Asn144, and Asn152 each carry an N-linked (GlcNAc...) asparagine glycan. Residues 130–440 (QWHLINPNYP…FGKLDAYNIV (311 aa)) form the Peptidase S8 domain. Catalysis depends on charge relay system residues Asp164 and His202. Cystine bridges form between Cys218–Cys365 and Cys310–Cys340. The Charge relay system role is filled by Ser373. 2 N-linked (GlcNAc...) asparagine glycosylation sites follow: Asn392 and Asn538. The P/Homo B domain maps to 449–583 (VNPQGWLYLP…RLKMFGETID (135 aa)). The disordered stretch occupies residues 599–632 (AEVKSTESKTTTPTAQTSSFTTTSGEETSGANKL). Residues 606–628 (SKTTTPTAQTSSFTTTSGEETSG) show a composition bias toward low complexity. The helical transmembrane segment at 641–661 (LYLAIFVIGAIVIIIYYLFFL) threads the bilayer. Positions 715–756 (EEELSPRESSSNNPFGNESLESFDNSPDHTSNLLGQNSIPNK) are disordered. Over residues 721–756 (RESSSNNPFGNESLESFDNSPDHTSNLLGQNSIPNK) the composition is skewed to polar residues.

This sequence belongs to the peptidase S8 family. Furin subfamily. Ca(2+) serves as cofactor.

It localises to the membrane. Probably involved in the processing of the precursor of m1-toxin and alpha-factor. The protein is Protease KEX1 (KEX1) of Kluyveromyces lactis (strain ATCC 8585 / CBS 2359 / DSM 70799 / NBRC 1267 / NRRL Y-1140 / WM37) (Yeast).